An 898-amino-acid chain; its full sequence is DNA-directed DNA polymerase (898 aa).

Residues 101–337 form a 3'-5'exonuclease region; that stretch reads YDRKFVRVAN…VQAIDKIRGF (237 aa). 3 residues coordinate Mg(2+): aspartate 112, glutamate 114, and aspartate 219. The segment at 245–261 is beta hairpin; it reads VKSKLIQNMYGSKEIYS. Mg(2+)-binding residues include aspartate 324, aspartate 408, and leucine 409. The tract at residues 377–898 is polymerase; sequence IPQQGSHVKQ…EKASLDFLFG (522 aa). Substrate contacts are provided by residues 411–413, arginine 479, and lysine 557; that span reads SLY. Residue aspartate 620 coordinates Mg(2+). The tract at residues 702–705 is binding of DNA in B-conformation; sequence KKRY. The tract at residues 893-898 is interaction with the polymerase clamp; sequence LDFLFG.

This sequence belongs to the DNA polymerase type-B family. Interacts with the polymerase clamp; this interaction constitutes the polymerase holoenzyme. Interacts with the helicase assembly factor. Part of the replicase complex that includes the DNA polymerase, the polymerase clamp, the clamp loader complex, the single-stranded DNA binding protein, the primase, the helicase and the helicase assembly factor. It depends on Mg(2+) as a cofactor.

It carries out the reaction DNA(n) + a 2'-deoxyribonucleoside 5'-triphosphate = DNA(n+1) + diphosphate. Replicates the viral genomic DNA. This polymerase possesses two enzymatic activities: DNA synthesis (polymerase) and an exonucleolytic activity that degrades single-stranded DNA in the 3'- to 5'-direction for proofreading purpose. The sequence is that of DNA-directed DNA polymerase (43) from Enterobacteria phage T4 (Bacteriophage T4).